Here is a 543-residue protein sequence, read N- to C-terminus: Zinc finger protein tra-4 (543 aa).

Residues 1–38 (MDDPNQCTIKQEDSITRPRPTEAPTIQNLKQEPAIEEG) form a disordered region. Residues 10-20 (KQEDSITRPRP) show a composition bias toward basic and acidic residues. 7 C2H2-type zinc fingers span residues 218-241 (VRCK…RDKH), 327-350 (PQCP…AKKH), 381-406 (YVCF…KKFH), 413-436 (FRCS…KMSH), 442-464 (FQCH…ERMH), 470-493 (FECK…RDEH), and 495-518 (YVCA…YEEH).

It belongs to the krueppel C2H2-type zinc-finger protein family. As to quaternary structure, interacts with histone deacetylase hda-1. May interact with nasp-1.

It localises to the nucleus. Its function is as follows. Probable transcription factor. Promotes normal hermaphrodite (XX) development, in concert with histone deacetylase hda-1 and nasp-1, perhaps as components of a complex. May cooperate with transcription factor tra-1 to repress male-specific genes in hermaphrodites. Synthetic multivulva (synMuv) class B protein, required to repress the induction of vulval development by let-60 Ras signaling. The chain is Zinc finger protein tra-4 from Caenorhabditis elegans.